Here is a 711-residue protein sequence, read N- to C-terminus: Denticleless protein homolog B (711 aa).

WD repeat units follow at residues 47-89 (GRAV…MQRL), 96-135 (AHTN…LIGE), and 138-178 (GHQC…KDGF). The short motif at 168-171 (WDTR) is the DDB1-binding motif element. The Nuclear localization signal motif lies at 197–204 (PSKVKKRK). 4 WD repeats span residues 215 to 254 (DSQQ…STYR), 270 to 309 (TRKL…TDPV), 314 to 355 (GHQN…AAPI), and 359 to 398 (GHCQ…SEDS). The DDB1-binding motif signature appears at 244 to 247 (WDLR). 2 disordered regions span residues 473–524 (QTPK…AFTP) and 601–698 (EFDQ…TPGS). Composition is skewed to polar residues over residues 504–516 (TPKS…SKTP) and 606–627 (LSPS…TLSP). The span at 631–642 (MKSDFVDKENSS) shows a compositional bias: basic and acidic residues. A compositionally biased stretch (low complexity) spans 658-675 (DNSSPQFKSSSSPSSRNS). Residues 684–697 (NAPNSPVSVPTTPG) are compositionally biased toward polar residues.

It belongs to the WD repeat cdt2 family. Component of the DCX(DTL) E3 ubiquitin ligase complex, at least composed of cul4 (cul4a or cul4b), ddb1, dtl/cdt2 and rbx1.

Its subcellular location is the nucleus. It localises to the cytoplasm. The protein localises to the cytoskeleton. The protein resides in the microtubule organizing center. It is found in the centrosome. Its subcellular location is the chromosome. It functions in the pathway protein modification; protein ubiquitination. Substrate-specific adapter of a DCX (DDB1-CUL4-X-box) E3 ubiquitin-protein ligase complex required for cell cycle control, DNA damage response and translesion DNA synthesis. The DCX(DTL) complex, also named CRL4(CDT2) complex, mediates the polyubiquitination and subsequent degradation of CDT1, CDKN1A/p21(CIP1), KMT5A and SDE2. CDT1 degradation in response to DNA damage is necessary to ensure proper cell cycle regulation of DNA replication. CDKN1A/p21(CIP1) degradation during S phase or following UV irradiation is essential to control replication licensing. KMT5A degradation is also important for a proper regulation of mechanisms such as TGF-beta signaling, cell cycle progression, DNA repair and cell migration. Most substrates require their interaction with PCNA for their polyubiquitination: substrates interact with PCNA via their PIP-box, and those containing the 'K+4' motif in the PIP box, recruit the DCX(DTL) complex, leading to their degradation. In undamaged proliferating cells, the DCX(DTL) complex also promotes the 'Lys-164' monoubiquitination of PCNA, thereby being involved in PCNA-dependent translesion DNA synthesis. May play a role in the regulation of the circadian clock. In Xenopus laevis (African clawed frog), this protein is Denticleless protein homolog B (dtl-b).